Consider the following 192-residue polypeptide: 3-hydroxyanthranilate 3,4-dioxygenase 1 (192 aa).

O2 is bound at residue arginine 50. Histidine 54, glutamate 60, and histidine 102 together coordinate Fe cation. Residue glutamate 60 coordinates substrate. Residues arginine 106 and glutamate 116 each contribute to the substrate site. A divalent metal cation is bound by residues cysteine 131, cysteine 134, cysteine 168, and cysteine 171.

Belongs to the 3-HAO family. Requires Fe(2+) as cofactor.

It localises to the cytoplasm. The catalysed reaction is 3-hydroxyanthranilate + O2 = (2Z,4Z)-2-amino-3-carboxymuconate 6-semialdehyde. It participates in cofactor biosynthesis; NAD(+) biosynthesis; quinolinate from L-kynurenine: step 3/3. Functionally, catalyzes the oxidative ring opening of 3-hydroxyanthranilate to 2-amino-3-carboxymuconate semialdehyde, which spontaneously cyclizes to quinolinate. The protein is 3-hydroxyanthranilate 3,4-dioxygenase 1 (bna1-1) of Aspergillus clavatus (strain ATCC 1007 / CBS 513.65 / DSM 816 / NCTC 3887 / NRRL 1 / QM 1276 / 107).